A 203-amino-acid chain; its full sequence is Large ribosomal subunit protein bL25 (203 aa).

It belongs to the bacterial ribosomal protein bL25 family. CTC subfamily. As to quaternary structure, part of the 50S ribosomal subunit; part of the 5S rRNA/L5/L18/L25 subcomplex. Contacts the 5S rRNA. Binds to the 5S rRNA independently of L5 and L18.

This is one of the proteins that binds to the 5S RNA in the ribosome where it forms part of the central protuberance. This Cereibacter sphaeroides (strain ATCC 17025 / ATH 2.4.3) (Rhodobacter sphaeroides) protein is Large ribosomal subunit protein bL25.